Consider the following 2147-residue polypeptide: Large tegument protein deneddylase (2147 aa).

The deubiquitination activity stretch occupies residues methionine 1 to glycine 233. One can recognise a Peptidase C76 domain in the interval isoleucine 3–aspartate 223. Active-site residues include cysteine 23, aspartate 156, and histidine 158. Disordered regions lie at residues alanine 228–arginine 301, glutamate 1419–glutamate 1438, serine 1567–threonine 1589, and arginine 2034–glutamate 2072. The segment covering serine 240–serine 261 has biased composition (low complexity). Residue threonine 292 is a region of interest, interaction with inner tegument protein. The segment covering alanine 2052–proline 2061 has biased composition (basic and acidic residues).

The protein belongs to the herpesviridae large tegument protein family. Interacts with host CUL1 and CUL4A; these interactions inhibit the E3 ligase activity of cullins. Interacts with inner tegument protein. Interacts with capsid vertex specific component CVC2. Interacts with the major capsid protein/MCP.

It is found in the virion tegument. It localises to the host cytoplasm. The protein localises to the host nucleus. It carries out the reaction Thiol-dependent hydrolysis of ester, thioester, amide, peptide and isopeptide bonds formed by the C-terminal Gly of ubiquitin (a 76-residue protein attached to proteins as an intracellular targeting signal).. Functionally, large tegument protein that plays multiple roles in the viral cycle. During viral entry, remains associated with the capsid while most of the tegument is detached and participates in the capsid transport toward the host nucleus. Plays a role in the routing of the capsid at the nuclear pore complex and subsequent uncoating. Within the host nucleus, acts as a deneddylase and promotes the degradation of nuclear CRLs (cullin-RING ubiquitin ligases) and thereby stabilizes nuclear CRL substrates, while cytoplasmic CRLs remain unaffected. These modifications prevent host cell cycle S-phase progression and create a favorable environment allowing efficient viral genome replication. Participates later in the secondary envelopment of capsids. Indeed, plays a linker role for the association of the outer viral tegument to the capsids together with the inner tegument protein. The chain is Large tegument protein deneddylase (M48) from Mus musculus (Mouse).